A 188-amino-acid polypeptide reads, in one-letter code: Apolipoprotein M (188 aa).

Residues 1–22 constitute a signal peptide (not cleaved); sequence MFHQIWAALLYFYGIILNSIYQ. 3 disulfides stabilise this stretch: Cys23-Cys167, Cys95-Cys183, and Cys128-Cys157. N-linked (GlcNAc...) asparagine glycosylation is present at Asn135. Tetradecanoate is bound by residues Glu136 and Arg143.

This sequence belongs to the calycin superfamily. Lipocalin family. Highly divergent. As to quaternary structure, interacts with LRP2; LRP2 mediates APOM renal uptake and subsequent lysosomal degradation. As to expression, plasma protein. Expressed in liver and kidney.

It localises to the secreted. Functionally, probably involved in lipid transport. Can bind sphingosine-1-phosphate, myristic acid, palmitic acid and stearic acid, retinol, all-trans-retinoic acid and 9-cis-retinoic acid. The polypeptide is Apolipoprotein M (APOM) (Homo sapiens (Human)).